A 27-amino-acid polypeptide reads, in one-letter code: Ferric reductase B (27 aa).

In terms of assembly, homodimer. The cofactor is FAD.

It catalyses the reaction 2 a Fe(II)-siderophore + NAD(+) + H(+) = 2 a Fe(III)-siderophore + NADH. Its function is as follows. Reductase activity that acts on Fe(3+)-chelates and uses both NADH and NADPH as electron donors. May play a role in iron uptake. The chain is Ferric reductase B (ferB) from Paracoccus denitrificans.